Reading from the N-terminus, the 131-residue chain is Aspartate 1-decarboxylase (131 aa).

The active-site Schiff-base intermediate with substrate; via pyruvic acid is the Ser-25. Residue Ser-25 is modified to Pyruvic acid (Ser). Thr-57 is a binding site for substrate. Residue Tyr-58 is the Proton donor of the active site. Residue 73–75 coordinates substrate; sequence GAA.

This sequence belongs to the PanD family. As to quaternary structure, heterooctamer of four alpha and four beta subunits. Pyruvate is required as a cofactor. Is synthesized initially as an inactive proenzyme, which is activated by self-cleavage at a specific serine bond to produce a beta-subunit with a hydroxyl group at its C-terminus and an alpha-subunit with a pyruvoyl group at its N-terminus.

Its subcellular location is the cytoplasm. The enzyme catalyses L-aspartate + H(+) = beta-alanine + CO2. Its pathway is cofactor biosynthesis; (R)-pantothenate biosynthesis; beta-alanine from L-aspartate: step 1/1. Its function is as follows. Catalyzes the pyruvoyl-dependent decarboxylation of aspartate to produce beta-alanine. The polypeptide is Aspartate 1-decarboxylase (Anaeromyxobacter dehalogenans (strain 2CP-C)).